A 744-amino-acid chain; its full sequence is Cytoskeleton-associated protein 2-like (744 aa).

Disordered regions lie at residues 35-56, 76-169, 182-216, 317-337, and 428-452; these read YLKAKNNCPNPPHSKSTIGPKK, LQSR…THVE, KENLPQDLPNSERKPNPESWTINKPQTNQTKSSLA, TVTEQKVKHSKPSTHPSVLQG, and NKTAPRTQAGGPTISGRGVPNGAQT. Polar residues-rich tracts occupy residues 76 to 86, 102 to 129, and 137 to 154; these read LQSRPANITRS, SESVSSNPNGKPPGNSQQLRGFGSSTDG, and GSLNVQKLKTTKQQVTDQ. A Glycyl lysine isopeptide (Lys-Gly) (interchain with G-Cter in SUMO1); alternate cross-link involves residue K195. K195 participates in a covalent cross-link: Glycyl lysine isopeptide (Lys-Gly) (interchain with G-Cter in SUMO2); alternate. Over residues 199-216 the composition is skewed to polar residues; sequence ESWTINKPQTNQTKSSLA. Phosphoserine is present on S744.

It belongs to the CKAP2 family. Post-translationally, ubiquitinated by the anaphase promoting complex/cyclosome (APC/C).

Its subcellular location is the cytoplasm. The protein localises to the cytoskeleton. It localises to the spindle pole. Microtubule-associated protein required for mitotic spindle formation and cell-cycle progression in neural progenitor cells. This Bos taurus (Bovine) protein is Cytoskeleton-associated protein 2-like (CKAP2L).